The primary structure comprises 509 residues: Maturase K (509 aa).

Belongs to the intron maturase 2 family. MatK subfamily.

It is found in the plastid. The protein resides in the chloroplast. Its function is as follows. Usually encoded in the trnK tRNA gene intron. Probably assists in splicing its own and other chloroplast group II introns. This chain is Maturase K, found in Sequoia sempervirens (California redwood).